Reading from the N-terminus, the 366-residue chain is tRNA pseudouridine synthase B (366 aa).

Catalysis depends on Asp-44, which acts as the Nucleophile.

This sequence belongs to the pseudouridine synthase TruB family. Type 1 subfamily.

The catalysed reaction is uridine(55) in tRNA = pseudouridine(55) in tRNA. Responsible for synthesis of pseudouridine from uracil-55 in the psi GC loop of transfer RNAs. The chain is tRNA pseudouridine synthase B from Treponema pallidum (strain Nichols).